Here is a 322-residue protein sequence, read N- to C-terminus: tRNA-modifying protein YgfZ (322 aa).

Trp182 provides a ligand contact to folate.

This sequence belongs to the tRNA-modifying YgfZ family.

It localises to the cytoplasm. Its function is as follows. Folate-binding protein involved in regulating the level of ATP-DnaA and in the modification of some tRNAs. It is probably a key factor in regulatory networks that act via tRNA modification, such as initiation of chromosomal replication. The protein is tRNA-modifying protein YgfZ of Vibrio parahaemolyticus serotype O3:K6 (strain RIMD 2210633).